The sequence spans 478 residues: Proline--tRNA ligase (478 aa).

It belongs to the class-II aminoacyl-tRNA synthetase family. ProS type 3 subfamily. In terms of assembly, homodimer.

It is found in the cytoplasm. It catalyses the reaction tRNA(Pro) + L-proline + ATP = L-prolyl-tRNA(Pro) + AMP + diphosphate. Its function is as follows. Catalyzes the attachment of proline to tRNA(Pro) in a two-step reaction: proline is first activated by ATP to form Pro-AMP and then transferred to the acceptor end of tRNA(Pro). The polypeptide is Proline--tRNA ligase (Methanococcoides burtonii (strain DSM 6242 / NBRC 107633 / OCM 468 / ACE-M)).